The following is a 79-amino-acid chain: MEGSIKNCTQCDEASYDILDADSLRTCEALVRQKIDFEEIYIKQHNDRLLFKDMNKVVEVLERKTVLVTLKTYPTRNPH.

It localises to the mitochondrion. This is an uncharacterized protein from Marchantia polymorpha (Common liverwort).